The sequence spans 91 residues: Small ribosomal subunit protein bS20 (91 aa).

The tract at residues 1–23 is disordered; sequence MANTSSAKKATRKIARRTEVNKA.

It belongs to the bacterial ribosomal protein bS20 family.

Functionally, binds directly to 16S ribosomal RNA. In Rhizobium rhizogenes (strain K84 / ATCC BAA-868) (Agrobacterium radiobacter), this protein is Small ribosomal subunit protein bS20.